Reading from the N-terminus, the 255-residue chain is Indole-3-glycerol phosphate synthase (255 aa).

This sequence belongs to the TrpC family.

It catalyses the reaction 1-(2-carboxyphenylamino)-1-deoxy-D-ribulose 5-phosphate + H(+) = (1S,2R)-1-C-(indol-3-yl)glycerol 3-phosphate + CO2 + H2O. The protein operates within amino-acid biosynthesis; L-tryptophan biosynthesis; L-tryptophan from chorismate: step 4/5. The polypeptide is Indole-3-glycerol phosphate synthase (Streptococcus pneumoniae (strain Taiwan19F-14)).